A 371-amino-acid polypeptide reads, in one-letter code: MGPRVLPLLEPGCRPQAGKWYRMAPRGEWPRGRVGHGCLFVPGGSGRVLLLGGADPAGAFADAHFVELGAHLWAPAAWSGLRPRYEHATFLSACRPPRLWVFGGAHRAGNRSCVQVLDPEIGTWESPEVTGIPPLPRTFHTSSAAIGDCLYVFGGGDKGAEPVKDQQLHVFDTVALAWTQPDTHGDPPSPRHGHVVVAVGTKLFIHGGLAGDIFYNDLFCIDTTDMKWVKIAATGDVPGGRASHSSAVFKDHLYIFGGIGPDGTLDTTYKYHIEEQQWTLLQFDSPLPAGRLDHAMCVIPWRVGKNGDAAAVSKEDKAEPTASAGDRAGHLCRGQDKKACTEDTMMHLLLIFGGMDTQAEIYRDCIVSLIE.

6 Kelch repeats span residues 47-93 (RVLL…FLSA), 98-144 (RLWV…TSSA), 149-201 (CLYV…AVGT), 202-251 (KLFI…VFKD), 252-301 (HLYI…VIPW), and 348-371 (LLLIFGGMDTQAEIYRDCIVSLIE).

Functionally, rab9 effector required for endosome to trans-Golgi network (TGN) transport. This chain is Rab9 effector protein with kelch motifs (RABEPK), found in Gallus gallus (Chicken).